A 161-amino-acid chain; its full sequence is Nucleotide-binding protein azo2183 (161 aa).

It belongs to the YajQ family.

In terms of biological role, nucleotide-binding protein. This chain is Nucleotide-binding protein azo2183, found in Azoarcus sp. (strain BH72).